Here is a 157-residue protein sequence, read N- to C-terminus: N5-carboxyaminoimidazole ribonucleotide mutase (157 aa).

Substrate contacts are provided by Ser8, Asp11, and Arg38.

The protein belongs to the AIR carboxylase family. Class I subfamily.

It carries out the reaction 5-carboxyamino-1-(5-phospho-D-ribosyl)imidazole + H(+) = 5-amino-1-(5-phospho-D-ribosyl)imidazole-4-carboxylate. The protein operates within purine metabolism; IMP biosynthesis via de novo pathway; 5-amino-1-(5-phospho-D-ribosyl)imidazole-4-carboxylate from 5-amino-1-(5-phospho-D-ribosyl)imidazole (N5-CAIR route): step 2/2. Catalyzes the conversion of N5-carboxyaminoimidazole ribonucleotide (N5-CAIR) to 4-carboxy-5-aminoimidazole ribonucleotide (CAIR). The polypeptide is N5-carboxyaminoimidazole ribonucleotide mutase (Methanocaldococcus jannaschii (strain ATCC 43067 / DSM 2661 / JAL-1 / JCM 10045 / NBRC 100440) (Methanococcus jannaschii)).